Consider the following 255-residue polypeptide: tRNA (guanine-N(1)-)-methyltransferase (255 aa).

Residues G113 and 133–138 (IGDYVL) each bind S-adenosyl-L-methionine.

It belongs to the RNA methyltransferase TrmD family. Homodimer.

The protein resides in the cytoplasm. It carries out the reaction guanosine(37) in tRNA + S-adenosyl-L-methionine = N(1)-methylguanosine(37) in tRNA + S-adenosyl-L-homocysteine + H(+). Its function is as follows. Specifically methylates guanosine-37 in various tRNAs. This is tRNA (guanine-N(1)-)-methyltransferase from Escherichia coli O81 (strain ED1a).